Here is a 203-residue protein sequence, read N- to C-terminus: 2-hydroxychromene-2-carboxylate isomerase (203 aa).

The active-site Nucleophile is the Ser11. Ser11 contributes to the glutathione binding site. Substrate contacts are provided by residues Lys43, 53–54, and Tyr84; that span reads NR. Glutathione-binding positions include Val168 and 179 to 182; that span reads WGND.

This sequence belongs to the GST superfamily. NadH family. The cofactor is glutathione.

The catalysed reaction is 2-hydroxychromene-2-carboxylate = (3E)-4-(2-hydroxyphenyl)-2-oxobut-3-enoate. It participates in aromatic compound metabolism; naphthalene degradation. Involved in the naphthalene catabolic pathway. Catalyzes the reversible glutathione-dependent isomerization of 2-hydroxychromene-2-carboxylate (HCCA) to trans-O-hydroxybenzylidenepyruvate (THBPA). The polypeptide is 2-hydroxychromene-2-carboxylate isomerase (nahD) (Pseudomonas putida (Arthrobacter siderocapsulatus)).